A 356-amino-acid polypeptide reads, in one-letter code: Histidinol-phosphate aminotransferase (356 aa).

Lys-214 carries the N6-(pyridoxal phosphate)lysine modification.

The protein belongs to the class-II pyridoxal-phosphate-dependent aminotransferase family. Histidinol-phosphate aminotransferase subfamily. As to quaternary structure, homodimer. Pyridoxal 5'-phosphate is required as a cofactor.

The catalysed reaction is L-histidinol phosphate + 2-oxoglutarate = 3-(imidazol-4-yl)-2-oxopropyl phosphate + L-glutamate. It functions in the pathway amino-acid biosynthesis; L-histidine biosynthesis; L-histidine from 5-phospho-alpha-D-ribose 1-diphosphate: step 7/9. The polypeptide is Histidinol-phosphate aminotransferase (Escherichia coli O9:H4 (strain HS)).